Consider the following 362-residue polypeptide: Chorismate synthase (362 aa).

Positions 48 and 54 each coordinate NADP(+). FMN contacts are provided by residues 125 to 127, 238 to 239, Gly278, 293 to 297, and Arg319; these read RSS, NA, and KPTSS.

This sequence belongs to the chorismate synthase family. Homotetramer. It depends on FMNH2 as a cofactor.

The enzyme catalyses 5-O-(1-carboxyvinyl)-3-phosphoshikimate = chorismate + phosphate. It functions in the pathway metabolic intermediate biosynthesis; chorismate biosynthesis; chorismate from D-erythrose 4-phosphate and phosphoenolpyruvate: step 7/7. In terms of biological role, catalyzes the anti-1,4-elimination of the C-3 phosphate and the C-6 proR hydrogen from 5-enolpyruvylshikimate-3-phosphate (EPSP) to yield chorismate, which is the branch point compound that serves as the starting substrate for the three terminal pathways of aromatic amino acid biosynthesis. This reaction introduces a second double bond into the aromatic ring system. The sequence is that of Chorismate synthase from Aeromonas salmonicida (strain A449).